The primary structure comprises 310 residues: Aminoacyl tRNA synthase complex-interacting multifunctional protein 1 (310 aa).

N-acetylalanine is present on alanine 2. The required for fibroblast proliferation stretch occupies residues 6 to 46 (AVLKRLEQKGAEADQIIEYLKQQVALLKEKAILQATMREEK). The interval 54-192 (KLKKEIEELK…APRTVVSGLV (139 aa)) is interaction with HSP90B1. The span at 92-110 (ASESVVQSPSVATTASPAT) shows a compositional bias: polar residues. The segment at 92–147 (ASESVVQSPSVATTASPATKEQIKAGEEKKVKEKTEKKGEKKEKQQSAAASTDSKP) is disordered. Residues 101-115 (SVATTASPATKEQIK) are required for endothelial cell death. Over residues 112–136 (EQIKAGEEKKVKEKTEKKGEKKEKQ) the composition is skewed to basic and acidic residues. The segment at 115-190 (KAGEEKKVKE…EAAPRTVVSG (76 aa)) is required for endothelial cell migration. Serine 138 bears the Phosphoserine mark. The 102-residue stretch at 149–250 (DASRLDLRIG…NGSVPGDRIT (102 aa)) folds into the tRNA-binding domain. Lysine 267 bears the N6-succinyllysine mark.

As to quaternary structure, homodimer. Part of the multisynthetase complex (MSC), a multisubunit complex that groups tRNA ligases for Arg (RARS1), Asp (DARS1), Gln (QARS1), Ile (IARS1), Leu (LARS1), Lys (KARS1), Met (MARS1) the bifunctional ligase for Glu and Pro (EPRS1) and the auxiliary subunits AIMP1/p43, AIMP2/p38 and EEF1E1/p18. Interacts (via N-terminus) with RARS1 (via N-terminus). Part of a complex composed of RARS1, QARS1 and AIMP1. Interacts (via C-terminus) with SMURF2. Interacts (via N-terminus) with HSP90B1/gp96 (via C-terminus). Interacts with PSMA7. Interacts with TARS3. In terms of processing, cleaved by caspase-7 in response to apoptosis to produce EMAP-II. Highly expressed in salivary glands and pancreatic alpha cells in the adult (at protein level). In the embryo, expressed primarily at sites of tissue remodeling such as ganglia, developing bones and teeth.

The protein localises to the nucleus. The protein resides in the cytoplasm. Its subcellular location is the cytosol. It localises to the secreted. It is found in the endoplasmic reticulum. The protein localises to the golgi apparatus. Non-catalytic component of the multisynthase complex. Stimulates the catalytic activity of cytoplasmic arginyl-tRNA synthase. Binds tRNA. Possesses inflammatory cytokine activity. Negatively regulates TGF-beta signaling through stabilization of SMURF2 by binding to SMURF2 and inhibiting its SMAD7-mediated degradation. Involved in glucose homeostasis through induction of glucagon secretion at low glucose levels. Promotes dermal fibroblast proliferation and wound repair. Regulates KDELR1-mediated retention of HSP90B1/gp96 in the endoplasmic reticulum. Plays a role in angiogenesis by inducing endothelial cell migration at low concentrations and endothelian cell apoptosis at high concentrations. Induces maturation of dendritic cells and monocyte cell adhesion. Modulates endothelial cell responses by degrading HIF-1A through interaction with PSMA7. The sequence is that of Aminoacyl tRNA synthase complex-interacting multifunctional protein 1 (Aimp1) from Mus musculus (Mouse).